The following is a 446-amino-acid chain: Transcription factor SOX-8 (446 aa).

Disordered regions lie at residues 1-58 (MLDM…DPAE), 155-259 (AERL…RQNI), and 318-378 (HKSA…PFAG). The segment covering 40–53 (EGLGRAGVAVGGAR) has biased composition (gly residues). Residues 58–100 (EAADERFPACIRDAVSQVLKGYDWSLVPMPVRGGGGGALKAKP) are dimerization (DIM). The HMG box DNA-binding region spans 102 to 170 (VKRPMNAFMV…QHKKDHPDYK (69 aa)). Basic and acidic residues-rich tracts occupy residues 155-171 (AERL…DYKY), 210-219 (DGHHHGDHTG), and 242-253 (PELKLEGRRPVD). Residues 224–298 (PPTPPTTPKT…LPLGGPAPPE (75 aa)) form a transactivation domain (TAM) region. The transactivation domain (TAC) stretch occupies residues 335–446 (RPHIKTEQPS…QPVYTTLTRP (112 aa)). Low complexity predominate over residues 362 to 378 (SGQSSATPAAPAGPFAG). Residues 400–408 (PGLYQYPCF) carry the 9aaTAD motif. Positions 425 to 446 (LPPAHSPTSHWDQPVYTTLTRP) are disordered. Over residues 430–446 (SPTSHWDQPVYTTLTRP) the composition is skewed to polar residues.

It localises to the nucleus. Its function is as follows. Transcription factor that may play a role in central nervous system, limb and facial development. May be involved in male sex determination. Binds the consensus motif 5'-[AT][AT]CAA[AT]G-3'. This is Transcription factor SOX-8 from Homo sapiens (Human).